Consider the following 245-residue polypeptide: 4-hydroxy-tetrahydrodipicolinate reductase (245 aa).

NAD(+)-binding positions include 7 to 12 (GAKGKV), 75 to 77 (GTT), and 102 to 105 (APNF). His-132 (proton donor/acceptor) is an active-site residue. His-133 is a (S)-2,3,4,5-tetrahydrodipicolinate binding site. Catalysis depends on Lys-136, which acts as the Proton donor. Residue 142 to 143 (GT) coordinates (S)-2,3,4,5-tetrahydrodipicolinate.

Belongs to the DapB family.

The protein resides in the cytoplasm. The catalysed reaction is (S)-2,3,4,5-tetrahydrodipicolinate + NAD(+) + H2O = (2S,4S)-4-hydroxy-2,3,4,5-tetrahydrodipicolinate + NADH + H(+). It catalyses the reaction (S)-2,3,4,5-tetrahydrodipicolinate + NADP(+) + H2O = (2S,4S)-4-hydroxy-2,3,4,5-tetrahydrodipicolinate + NADPH + H(+). It participates in amino-acid biosynthesis; L-lysine biosynthesis via DAP pathway; (S)-tetrahydrodipicolinate from L-aspartate: step 4/4. In terms of biological role, catalyzes the conversion of 4-hydroxy-tetrahydrodipicolinate (HTPA) to tetrahydrodipicolinate. The chain is 4-hydroxy-tetrahydrodipicolinate reductase from Mycobacterium sp. (strain JLS).